A 375-amino-acid chain; its full sequence is Aminomethyltransferase (375 aa).

This sequence belongs to the GcvT family. The glycine cleavage system is composed of four proteins: P, T, L and H.

The catalysed reaction is N(6)-[(R)-S(8)-aminomethyldihydrolipoyl]-L-lysyl-[protein] + (6S)-5,6,7,8-tetrahydrofolate = N(6)-[(R)-dihydrolipoyl]-L-lysyl-[protein] + (6R)-5,10-methylene-5,6,7,8-tetrahydrofolate + NH4(+). The glycine cleavage system catalyzes the degradation of glycine. This chain is Aminomethyltransferase, found in Cupriavidus taiwanensis (strain DSM 17343 / BCRC 17206 / CCUG 44338 / CIP 107171 / LMG 19424 / R1) (Ralstonia taiwanensis (strain LMG 19424)).